Reading from the N-terminus, the 275-residue chain is NH(3)-dependent NAD(+) synthetase (275 aa).

ATP is bound at residue 46-53; that stretch reads GISGGQDS. D52 is a Mg(2+) binding site. Residue R140 participates in deamido-NAD(+) binding. T160 serves as a coordination point for ATP. Position 165 (E165) interacts with Mg(2+). Deamido-NAD(+)-binding residues include K173 and D180. Residues K189 and T211 each coordinate ATP. Residue 260 to 261 participates in deamido-NAD(+) binding; it reads HK.

It belongs to the NAD synthetase family. As to quaternary structure, homodimer.

The catalysed reaction is deamido-NAD(+) + NH4(+) + ATP = AMP + diphosphate + NAD(+) + H(+). Its pathway is cofactor biosynthesis; NAD(+) biosynthesis; NAD(+) from deamido-NAD(+) (ammonia route): step 1/1. Catalyzes the ATP-dependent amidation of deamido-NAD to form NAD. Uses ammonia as a nitrogen source. The sequence is that of NH(3)-dependent NAD(+) synthetase from Escherichia coli O8 (strain IAI1).